The primary structure comprises 115 residues: Pro-neuregulin-4, membrane-bound isoform (115 aa).

At 1 to 62 (MPTDHEEPCG…SSIQTKSNLF (62 aa)) the chain is on the extracellular side. The EGF-like domain occupies 5–46 (HEEPCGPSHKSFCLNGGLCYVIPTIPSPFCRCVENYTGARCE). 3 disulfide bridges follow: cysteine 9/cysteine 23, cysteine 17/cysteine 34, and cysteine 36/cysteine 45. The N-linked (GlcNAc...) asparagine glycan is linked to asparagine 39. A helical transmembrane segment spans residues 63-83 (EAFVALAVLVTLIIGAFYFLC). The Cytoplasmic segment spans residues 84 to 115 (RKGHFQRASSVQYDINLVETSSTSAHHSHEQH).

This sequence belongs to the neuregulin family. Interacts with ERBB4. In terms of processing, proteolytic cleavage close to the plasma membrane on the external face leads to the release of the soluble growth factor form. Post-translationally, extensive glycosylation precedes the proteolytic cleavage.

The protein localises to the cell membrane. It localises to the secreted. Low affinity ligand for the ERBB4 tyrosine kinase receptor. Concomitantly recruits ERBB1 and ERBB2 coreceptors, resulting in ligand-stimulated tyrosine phosphorylation and activation of the ERBB receptors. Does not bind to the ERBB1, ERBB2 and ERBB3 receptors. The protein is Pro-neuregulin-4, membrane-bound isoform (NRG4) of Homo sapiens (Human).